A 906-amino-acid chain; its full sequence is Envelope glycoprotein B (906 aa).

Positions 1 to 31 (MESRIWCLVVCVNLCIVCLGAAVSSSSTSHA) are cleaved as a signal peptide. Low complexity predominate over residues 29-46 (SHATSSTHNGSHTSRTTS). The tract at residues 29 to 51 (SHATSSTHNGSHTSRTTSAQTRS) is disordered. Residues 32–750 (TSSTHNGSHT…EGVATFLKNP (719 aa)) are Virion surface-facing. Residues Asn-37, Asn-68, Asn-73, and Asn-85 are each glycosylated (N-linked (GlcNAc...) asparagine; by host). 5 disulfides stabilise this stretch: Cys-94–Cys-550, Cys-111–Cys-506, Cys-185–Cys-250, Cys-246–Cys-250, and Cys-344–Cys-391. The involved in fusion and/or binding to host membrane stretch occupies residues 152-158 (SYAYIYT). Asn-208 carries an N-linked (GlcNAc...) asparagine; by host glycan. The tract at residues 237–244 (GSTWLYRE) is involved in fusion and/or binding to host membrane. Residues Asn-281, Asn-286, Asn-302, Asn-341, Asn-383, Asn-405, Asn-409, Asn-417, Asn-447, Asn-452, Asn-464, Asn-465, Asn-554, and Asn-585 are each glycosylated (N-linked (GlcNAc...) asparagine; by host). An intrachain disulfide couples Cys-573 to Cys-610. Hydrophobic membrane proximal region stretches follow at residues 696-748 (VEDK…TFLK) and 727-747 (VAIGAVGGAVASVVEGVATFL). The helical transmembrane segment at 751–771 (FGAFTIILVAIAVVIITYLIY) threads the bilayer. The Intravirion portion of the chain corresponds to 772–906 (TRQRRLCTQP…LKDSDEEENV (135 aa)). Polar residues-rich tracts occupy residues 797–809 (VTSGSTKDTSLQA) and 859–876 (RAQQNGTDSLDGQTGTQD). Disordered regions lie at residues 797–837 (VTSG…TAAP) and 856–906 (AEQR…EENV). Basic and acidic residues predominate over residues 877 to 886 (KGQKPNLLDR). The Internalization motif motif lies at 894-897 (YRHL).

It belongs to the herpesviridae glycoprotein B family. In terms of assembly, homotrimer; disulfide-linked. Binds to heparan sulfate proteoglycans. Interacts with gH/gL heterodimer. Interacts with host TLR1 and TLR2. Interacts with host C-type lectin CD209/DC-SIGN. Interacts with host ITGB1, EGFR, and PDGFRA. In terms of processing, a proteolytic cleavage by host furin generates two subunits that remain linked by disulfide bonds.

It is found in the virion membrane. It localises to the host cell membrane. The protein localises to the host endosome membrane. The protein resides in the host Golgi apparatus membrane. In terms of biological role, envelope glycoprotein that plays a role in host cell entry, cell to-cell virus transmission, and fusion of infected cells. May be involved in the initial attachment via binding to heparan sulfate together with the gM/gN complex that binds heparin with higher affinity. Interacts with host integrin ITGB1, PDGFRA and EGFR that likely serve as postattachment entry receptors. Also participates in the fusion of viral and cellular membranes leading to virus entry into the host cell. Membrane fusion is mediated by the fusion machinery composed at least of gB and the heterodimer gH/gL. The polypeptide is Envelope glycoprotein B (Human cytomegalovirus (strain AD169) (HHV-5)).